The following is a 300-amino-acid chain: Lysenin-related protein 2 (300 aa).

The segment at 12–35 is N-terminal cap domain; it reads EQIEVDVVAVWKEGYVYENRGSTS. Residues 36 to 109 form a beta-hairpin domain region; that stretch reads VEQKIKITKG…SKEIEHTITI (74 aa). Residues 110 to 158 form an N-terminal cap domain region; sequence PPTSKFTRWQLNADVGGADIEYMYLIDEVTPIGGTLSIPQVIKSRAKIL. The interval 159–299 is C-terminal receptor-binding domain; the sequence is VGREIYLGET…EDKWILEVVK (141 aa). Positions 187, 229, 235, and 284 each coordinate an N-(acyl)-sphingosylphosphocholine. Cys-274 and Cys-285 are disulfide-bonded.

The protein belongs to the lysenin family. Binds to sphingomyelin as a monomer by using its C-terminal domain. Forms a nonamer when sphingomyelin/LRP-2 ratio is lower than ca 500. Oligomerization, but not binding, is influenced by the fluidity of sphingomyelin. As to expression, expressed by coelomocytes.

It is found in the secreted. The protein resides in the target cell membrane. In terms of biological role, pore-forming toxin that specifically binds sphingomyelin in the plasma membrane of various cells. Has hemolytic activity. It also has antibacterial activities against B.megaterium. This Eisenia fetida (Red wiggler worm) protein is Lysenin-related protein 2.